A 585-amino-acid chain; its full sequence is Arginine--tRNA ligase (585 aa).

Residues 127–137 carry the 'HIGH' region motif; that stretch reads PNTNKPLHVGH.

This sequence belongs to the class-I aminoacyl-tRNA synthetase family. In terms of assembly, monomer.

Its subcellular location is the cytoplasm. It carries out the reaction tRNA(Arg) + L-arginine + ATP = L-arginyl-tRNA(Arg) + AMP + diphosphate. This chain is Arginine--tRNA ligase, found in Borrelia duttonii (strain Ly).